The following is a 2013-amino-acid chain: MWILALSLFQSFANVFSEEPHSSLYFVNASLQEVVFASTSGTLVPCPAAGIPPVTLRWYLATGEEIYDVPGIRHVHPNGTLQIFPFPPSSFSTLIHDNTYYCTAENPSGKIRSQDVHIKAVLREPYTVRVEDQKTMRGNVAVFKCIIPSSVEAYVTVVSWEKDTVSLVSGSRFLITSTGALYIKDVQNEDGLYNYRCITRHRYTGETRQSNSARLFVSDPANSAPSILDGFDHRKAMAGQRVELPCKALGHPEPDYRWLKDNMPLELSGRFQKTVTGLLIENSRPSDSGSYVCEVSNRYGTAKVIGRLYVKQPLKATISPRKVKSSVGSQVSLSCSVTGNEDQELSWYRNGEILNPGKNVRITGLNHANLIMDHMVKSDGGAYQCFVRKDKLSAQDYVQVVLEDGTPKIISAFSEKVVSPAEPVSLVCNVKGTPLPTVTWTLDDDPILKGSGHRISQMITSEGNVVSYLNISSSQVRDGGVYRCTANNSAGVVLYQARINVRGPASIRPMKNITAIAGRDTYIHCRVIGYPYYSIKWYKNANLLPFNHRQVAFENNGTLKLSDVQKEVDEGEYTCNVLVQPQLSTSQSVHVTVKVPPFIQPFEFPRFSIGQRVFIPCVVVSGDLPITITWQKDGRPIPASLGVTIDNIDFTSSLRISNLSLMHNGNYTCIARNEAAAVEHQSQLIVRVPPKFVVQPRDQDGIYGKAVILNCSAEGYPVPTIVWKFSKGAGVPQFQPIALNGRIQVLSNGSLLIKHVVEEDSGYYLCKVSNDVGADVSKSMYLTVKIPAMITSYPNTTLATQGQRKEMSCTAHGEKPIIVRWEKEDRIINPEMARYLVSTKEVGEEVISTLQILPTVREDSGFFSCHAINSYGEDRGIIQLTVQEPPDPPEIEIKDVKARTITLRWTMGFDGNSPITGYDIECKNKSDSWDSAQRTKDVSPQLNSATIIDIHPSSTYSIRMYAKNRIGKSEPSNEITITADEAAPDGPPQEVHLEPTSSQSIRVTWKAPKKHLQNGIIRGYQIGYREYSTGGNFQFNIISIDTTGDSEVYTLDNLNKFTQYGLVVQACNRAGTGPSSQEIITTTLEDVPSYPPENVQAIATSPESISISWSTLSKEALNGILQGFRVIYWANLIDGELGEIKNVTTTQPSLELDGLEKYTNYSIQVLAFTRAGDGVRSEQIFTRTKEDVPGPPAGVKAAAASASMVFVSWLPPLKLNGIIRKYTVFCSHPYPTVISEFEASPDSFSYRIPNLSRNRQYSVWVVAVTSAGRGNSSEIITVEPLAKAPARILTFSGTVTTPWMKDIVLPCKAVGDPSPAVKWMKDSNGTPSLVTIDGRRSIFSNGSFIIRTVKAEDSGYYSCVANNNWGSDEIILNLQVQVPPDQPRLTVSKTTSSSITLSWLPGDNGGSSIRGYILQYSEDNSEQWGSFPISPSERSYRLENLKCGTWYKFTLTAQNGVGPGRISEIIEAKTLGKEPQFSKEQELFASINTTRVRLNLIGWNDGGCPITSFTLEYRPFGTTVWTTAQRTSLSKSYILYDLQEATWYELQMRVCNSAGCAEKQANFATLNYDGSTIPPLIKSVVQSEEGLTTNEGLKILVTISCILVGVLLLFVLLLVVRRRRREQRLKRLRDAKSLAEMLMSKNTRTSDTLSKQQQTLRMHIDIPRAQLLIEERDTMETIDDRSTVLLTDADFGEAAKQKSLTVTHTVHYQSVSQATGPLVDVSDARPGTNPTTRRNAKAGPTARNRYASQWTLNRPHPTISAHTLTTDWRLPTPRATGSVDKESDSYSVSPSQDTDRARSSMVSTESASSTYEELARAYEHAKMEEQLRHAKFTITECFISDTSSEQLTAGTNEYTDSLTSSTPSESGICRFTASPPKPQDGGRVVNMAVPKAHRPGDLIHLPPYLRMDFLLNRGAPGTSRDLSLGQACLEPQKSRTLKRPTVLEPTPMEASSSTSSTREGQQSWQQGAVATLPQREGAELGQAAKMSSSQESLLDSRGHLKGNNPYAKSYTLV.

The N-terminal stretch at 1–17 (MWILALSLFQSFANVFS) is a signal peptide. At 18-1594 (EEPHSSLYFV…EGLTTNEGLK (1577 aa)) the chain is on the extracellular side. Ig-like C2-type domains follow at residues 20-119 (PHSS…VHIK), 125-216 (PYTV…ARLF), 225-305 (PSIL…AKVI), 313-401 (PLKA…VQVV), 407-500 (PKII…ARIN), 504-592 (PASI…VHVT), 596-685 (PPFI…SQLI), 690-783 (PKFV…MYLT), and 787-883 (PAMI…LTVQ). Cystine bridges form between Cys46–Cys102, Cys145–Cys197, Cys246–Cys293, Cys335–Cys385, Cys428–Cys484, Cys525–Cys575, Cys617–Cys669, Cys711–Cys766, and Cys809–Cys865. N-linked (GlcNAc...) asparagine glycosylation is present at Asn78. A glycan (N-linked (GlcNAc...) asparagine) is linked at Asn470. An N-linked (GlcNAc...) asparagine glycan is attached at Asn666. Fibronectin type-III domains follow at residues 885 to 982 (PPDP…ADEA), 987 to 1086 (PPQE…TLED), 1091 to 1187 (PPEN…TKED), and 1191 to 1285 (PPAG…AKAP). N-linked (GlcNAc...) asparagine glycosylation is found at Asn1160 and Asn1250. Positions 1285–1377 (PARILTFSGT…DEIILNLQVQ (93 aa)) constitute an Ig-like C2-type 10 domain. Residues Cys1307 and Cys1359 are joined by a disulfide bond. Fibronectin type-III domains are found at residues 1379–1473 (PPDQ…TLGK) and 1474–1575 (EPQF…TIPP). The helical transmembrane segment at 1595-1615 (ILVTISCILVGVLLLFVLLLV) threads the bilayer. Over 1616-2013 (VRRRRREQRL…NPYAKSYTLV (398 aa)) the chain is Cytoplasmic. Positions 1616–2013 (VRRRRREQRL…NPYAKSYTLV (398 aa)) are required for netrin-mediated axon repulsion of neuronal growth cones. Disordered regions lie at residues 1718–1809 (LVDV…SASS) and 1920–2013 (RDLS…YTLV). Positions 1799 to 1809 (SSMVSTESASS) are enriched in low complexity. Over residues 1949 to 1968 (EASSSTSSTREGQQSWQQGA) the composition is skewed to polar residues.

As to quaternary structure, homodimer; mediates homophilic interactions to promote cell adhesion. Interacts with DCC; the interaction is abolished in response to NTN1. Interacts (via extracellular domain) with NTN1. Interacts (via extracellular domain) with UNC5C (via Ig-like C2-type domain). Interacts with PTK2. Interacts with FYN. In terms of processing, phosphorylated at tyrosine residues. Phosphorylation is enhanced by NTN1. Expressed in cortical and cerebellar neurons, in cells of the external and internal granular layer and of the Purkinje cell layer (at protein level). In the retina, expressed in dopaminergic and Nos1-positive amacrine cells and most retinal ganglion cells (at protein level). Expressed in the brain with highest levels in the cortex, olfactory bulb, hippocampus, thalamus, cerebellum and spinal cord. Expressed in the retinal ganglion layer (RGL).

The protein resides in the cell membrane. It localises to the cell projection. It is found in the axon. Its subcellular location is the synapse. The protein localises to the dendrite. The protein resides in the growth cone. Functionally, cell adhesion molecule that plays a role in neuronal self-avoidance. Promotes repulsion between specific neuronal processes of either the same cell or the same subtype of cells. Mediates within retinal amacrine and ganglion cell subtypes both isoneuronal self-avoidance for creating an orderly dendritic arborization and heteroneuronal self-avoidance to maintain the mosaic spacing between amacrine and ganglion cell bodies. Receptor for netrin required for axon guidance independently of and in collaboration with the receptor DCC. Might also collaborate with UNC5C in NTN1-mediated axon repulsion independently of DCC. In spinal cord development plays a role in guiding commissural axons projection and pathfinding across the ventral midline to reach the floor plate upon ligand binding. Mediates intracellular signaling by stimulating the activation of MAPK8 and MAP kinase p38. Adhesion molecule that promotes lamina-specific synaptic connections in the retina: expressed in specific subsets of interneurons and retinal ganglion cells (RGCs) and promotes synaptic connectivity via homophilic interactions. This is Cell adhesion molecule DSCAM (Dscam) from Mus musculus (Mouse).